The chain runs to 533 residues: MMPVRTYHHHHHHNNSNNHRLRRIIPRVLLAVFAIYAVSFAAYLLRHQSPHPHPHPAADPERDAVDAAGGGGGGGAVDRVRVEAPSSQKPWPRLPSFLPWTSASVRPPPKHSCEGYFGNGFSRLVDVLPARGGGGGGWFRCHHSETLRSSICEGGRVRLDPGLIAMSRGGEPLDQVMGRAEEEELPKYEPGALQVEAAAKRTGPLVEAGFLDAYVPTGGIGMHTMRSLLDSGRVVPPGELHCSQWVEEPTLLVTRFEYANLFHTITDWYSAYVSSRVTDLPNRPNVVFVDGHCKAQLEQTWEALFSNVTYVKNFSGPVCFRHAILSPLGYETALFKGLSESFSCEGASAESLREKPDHQKTARLSEFGEMILASFDLLRDDILSSKTSNGLNVLFVRREDYLAHPRHSGKVESRLSNEKEVYDAIEGWAKGQKCKINVINGLFAHMNMKEQLRAIQEASVVIGAHGAGLTHLVSATPDTKVLEIISSMYRRPHFALISHWKSLEYHAINLPGSYARVTDVINELSNILKGFGC.

At 1–23 (MMPVRTYHHHHHHNNSNNHRLRR) the chain is on the cytoplasmic side. The chain crosses the membrane as a helical; Signal-anchor for type II membrane protein span at residues 24–44 (IIPRVLLAVFAIYAVSFAAYL). Residues 45-533 (LRHQSPHPHP…LSNILKGFGC (489 aa)) are Lumenal-facing. The interval 51–78 (HPHPHPAADPERDAVDAAGGGGGGGAVD) is disordered. Residues 56 to 65 (PAADPERDAV) are compositionally biased toward basic and acidic residues. N307 and N313 each carry an N-linked (GlcNAc...) asparagine glycan.

Belongs to the glycosyltransferase 61 family. In terms of tissue distribution, expressed at the base of the crown roots and in the basal region of the shoot, which contains the shoot and axillary meristems.

The protein localises to the golgi apparatus membrane. It functions in the pathway glycan metabolism. Glycosyltransferase involved in the xylosylation of N-glycans. Possesses beta-1,2-xylosyltransferase activity, transferring xylose from UDP-xylose to the core beta-linked mannose of N-glycans. Beta-1,2-linked xylose residues on N-glycans are critical for seed germination and plant development and growth under conditions of abiotic stress. The polypeptide is Beta-1,2-xylosyltransferase RCN11 (Oryza sativa subsp. japonica (Rice)).